The primary structure comprises 185 residues: Ribosome-recycling factor (185 aa).

Belongs to the RRF family.

It localises to the cytoplasm. Responsible for the release of ribosomes from messenger RNA at the termination of protein biosynthesis. May increase the efficiency of translation by recycling ribosomes from one round of translation to another. In Laribacter hongkongensis (strain HLHK9), this protein is Ribosome-recycling factor.